Here is a 426-residue protein sequence, read N- to C-terminus: Serine--tRNA ligase (426 aa).

230 to 232 (TSE) contributes to the L-serine binding site. Residue 261–263 (RKE) participates in ATP binding. Glu284 contributes to the L-serine binding site. ATP is bound at residue 348–351 (EISS). Residue Ser385 participates in L-serine binding.

This sequence belongs to the class-II aminoacyl-tRNA synthetase family. Type-1 seryl-tRNA synthetase subfamily. As to quaternary structure, homodimer. The tRNA molecule binds across the dimer.

It localises to the cytoplasm. The catalysed reaction is tRNA(Ser) + L-serine + ATP = L-seryl-tRNA(Ser) + AMP + diphosphate + H(+). It catalyses the reaction tRNA(Sec) + L-serine + ATP = L-seryl-tRNA(Sec) + AMP + diphosphate + H(+). It participates in aminoacyl-tRNA biosynthesis; selenocysteinyl-tRNA(Sec) biosynthesis; L-seryl-tRNA(Sec) from L-serine and tRNA(Sec): step 1/1. Catalyzes the attachment of serine to tRNA(Ser). Is also able to aminoacylate tRNA(Sec) with serine, to form the misacylated tRNA L-seryl-tRNA(Sec), which will be further converted into selenocysteinyl-tRNA(Sec). The protein is Serine--tRNA ligase of Wolbachia pipientis subsp. Culex pipiens (strain wPip).